Reading from the N-terminus, the 123-residue chain is Large ribosomal subunit protein bL12 (123 aa).

This sequence belongs to the bacterial ribosomal protein bL12 family. As to quaternary structure, homodimer. Part of the ribosomal stalk of the 50S ribosomal subunit. Forms a multimeric L10(L12)X complex, where L10 forms an elongated spine to which 2 to 4 L12 dimers bind in a sequential fashion. Binds GTP-bound translation factors.

Forms part of the ribosomal stalk which helps the ribosome interact with GTP-bound translation factors. Is thus essential for accurate translation. This Bartonella quintana (strain Toulouse) (Rochalimaea quintana) protein is Large ribosomal subunit protein bL12.